Reading from the N-terminus, the 515-residue chain is 2-isopropylmalate synthase (515 aa).

The 263-residue stretch at 5 to 267 (VIIFDTTLRD…HTSLKNDEIH (263 aa)) folds into the Pyruvate carboxyltransferase domain. Positions 14, 202, 204, and 238 each coordinate Mn(2+). The regulatory domain stretch occupies residues 392–515 (KLNYLSVQSG…EIKQNKITTV (124 aa)).

Belongs to the alpha-IPM synthase/homocitrate synthase family. LeuA type 1 subfamily. As to quaternary structure, homodimer. Mn(2+) serves as cofactor.

The protein resides in the cytoplasm. It carries out the reaction 3-methyl-2-oxobutanoate + acetyl-CoA + H2O = (2S)-2-isopropylmalate + CoA + H(+). Its pathway is amino-acid biosynthesis; L-leucine biosynthesis; L-leucine from 3-methyl-2-oxobutanoate: step 1/4. In terms of biological role, catalyzes the condensation of the acetyl group of acetyl-CoA with 3-methyl-2-oxobutanoate (2-ketoisovalerate) to form 3-carboxy-3-hydroxy-4-methylpentanoate (2-isopropylmalate). This is 2-isopropylmalate synthase from Aliivibrio salmonicida (strain LFI1238) (Vibrio salmonicida (strain LFI1238)).